A 474-amino-acid polypeptide reads, in one-letter code: tRNA-2-methylthio-N(6)-dimethylallyladenosine synthase (474 aa).

The MTTase N-terminal domain maps to 3-120; it reads KKLHIKTWGC…LPEMIEQVRR (118 aa). Residues Cys12, Cys49, Cys83, Cys157, Cys161, and Cys164 each coordinate [4Fe-4S] cluster. The 233-residue stretch at 143–375 folds into the Radical SAM core domain; that stretch reads RAEGPTAFVS…QDRITQQAMR (233 aa). The TRAM domain occupies 378–441; it reads RHMMGTVQRI…TNSLRGKFIR (64 aa).

Belongs to the methylthiotransferase family. MiaB subfamily. In terms of assembly, monomer. The cofactor is [4Fe-4S] cluster.

It localises to the cytoplasm. It catalyses the reaction N(6)-dimethylallyladenosine(37) in tRNA + (sulfur carrier)-SH + AH2 + 2 S-adenosyl-L-methionine = 2-methylsulfanyl-N(6)-dimethylallyladenosine(37) in tRNA + (sulfur carrier)-H + 5'-deoxyadenosine + L-methionine + A + S-adenosyl-L-homocysteine + 2 H(+). In terms of biological role, catalyzes the methylthiolation of N6-(dimethylallyl)adenosine (i(6)A), leading to the formation of 2-methylthio-N6-(dimethylallyl)adenosine (ms(2)i(6)A) at position 37 in tRNAs that read codons beginning with uridine. The polypeptide is tRNA-2-methylthio-N(6)-dimethylallyladenosine synthase (Shewanella oneidensis (strain ATCC 700550 / JCM 31522 / CIP 106686 / LMG 19005 / NCIMB 14063 / MR-1)).